The primary structure comprises 252 residues: ATP synthase subunit a (252 aa).

7 helical membrane-spanning segments follow: residues 6 to 26 (LEQFAIIQLIPIHIGNLYFSF), 31 to 51 (LFMLLTISLVLLLVHFVTLNG), 88 to 108 (FFPLIYVTFTFLLFCNLIGMI), 117 to 137 (HFIITLGLSFSLFIGITIVGF), 144 to 164 (FFSILLPQGVPLPLAPFLVLL), 190 to 212 (LVKILSGFAWTMLSMGGILYLGQ), and 225 to 245 (LELGVAILQAYVFTILLCIYL).

This sequence belongs to the ATPase A chain family. In terms of assembly, F-type ATPases have 2 components, CF(1) - the catalytic core - and CF(0) - the membrane proton channel. CF(1) has five subunits: alpha(3), beta(3), gamma(1), delta(1), epsilon(1). CF(0) has three main subunits: a, b and c.

Its subcellular location is the mitochondrion inner membrane. Functionally, mitochondrial membrane ATP synthase (F(1)F(0) ATP synthase or Complex V) produces ATP from ADP in the presence of a proton gradient across the membrane which is generated by electron transport complexes of the respiratory chain. F-type ATPases consist of two structural domains, F(1) - containing the extramembraneous catalytic core and F(0) - containing the membrane proton channel, linked together by a central stalk and a peripheral stalk. During catalysis, ATP synthesis in the catalytic domain of F(1) is coupled via a rotary mechanism of the central stalk subunits to proton translocation. Key component of the proton channel; it may play a direct role in the translocation of protons across the membrane. This is ATP synthase subunit a (ATP6) from Marchantia polymorpha (Common liverwort).